A 122-amino-acid polypeptide reads, in one-letter code: Small ribosomal subunit protein uS13 (122 aa).

A disordered region spans residues 99-122 (RGQRTHTNARTRKGPAKAIAGKKK).

Belongs to the universal ribosomal protein uS13 family. Part of the 30S ribosomal subunit. Forms a loose heterodimer with protein S19. Forms two bridges to the 50S subunit in the 70S ribosome.

Its function is as follows. Located at the top of the head of the 30S subunit, it contacts several helices of the 16S rRNA. In the 70S ribosome it contacts the 23S rRNA (bridge B1a) and protein L5 of the 50S subunit (bridge B1b), connecting the 2 subunits; these bridges are implicated in subunit movement. Contacts the tRNAs in the A and P-sites. The chain is Small ribosomal subunit protein uS13 from Rhizobium etli (strain CIAT 652).